A 556-amino-acid polypeptide reads, in one-letter code: Endoglucanase 22 (556 aa).

The N-terminal stretch at 1 to 33 (MSRGRARLQPPPPGTRTTTLAAVLVLVLLAVVA) is a signal peptide. The Nucleophile role is filled by Asp-108. Catalysis depends on residues His-450, Asp-502, and Glu-511.

It belongs to the glycosyl hydrolase 9 (cellulase E) family.

It localises to the secreted. It catalyses the reaction Endohydrolysis of (1-&gt;4)-beta-D-glucosidic linkages in cellulose, lichenin and cereal beta-D-glucans.. This chain is Endoglucanase 22 (GLU11), found in Oryza sativa subsp. japonica (Rice).